The primary structure comprises 262 residues: Octanoyltransferase (262 aa).

Residues 41–232 (PQLPDGLLLL…SFCQVFGLQA (192 aa)) enclose the BPL/LPL catalytic domain. Substrate is bound by residues 96–103 (RGGEVTYH), 163–165 (AIG), and 176–178 (GFA). The active-site Acyl-thioester intermediate is cysteine 194.

This sequence belongs to the LipB family.

The protein resides in the cytoplasm. It catalyses the reaction octanoyl-[ACP] + L-lysyl-[protein] = N(6)-octanoyl-L-lysyl-[protein] + holo-[ACP] + H(+). The protein operates within protein modification; protein lipoylation via endogenous pathway; protein N(6)-(lipoyl)lysine from octanoyl-[acyl-carrier-protein]: step 1/2. In terms of biological role, catalyzes the transfer of endogenously produced octanoic acid from octanoyl-acyl-carrier-protein onto the lipoyl domains of lipoate-dependent enzymes. Lipoyl-ACP can also act as a substrate although octanoyl-ACP is likely to be the physiological substrate. This is Octanoyltransferase from Synechococcus sp. (strain JA-2-3B'a(2-13)) (Cyanobacteria bacterium Yellowstone B-Prime).